The chain runs to 224 residues: UPF0758 protein Maqu_3564 (224 aa).

The MPN domain occupies 102-224 (PLRSPADTRR…VISLAERGLM (123 aa)). The Zn(2+) site is built by H173, H175, and D186. The JAMM motif motif lies at 173 to 186 (HNHPSGVAEPSQAD).

The protein belongs to the UPF0758 family.

This is UPF0758 protein Maqu_3564 from Marinobacter nauticus (strain ATCC 700491 / DSM 11845 / VT8) (Marinobacter aquaeolei).